Here is a 418-residue protein sequence, read N- to C-terminus: Acyl-coenzyme A amino acid N-acyltransferase 2 (418 aa).

Active-site charge relay system residues include S234, D327, and H361. A Microbody targeting signal motif is present at residues 416–418; that stretch reads GKL.

The protein belongs to the C/M/P thioester hydrolase family.

The protein localises to the peroxisome. Acyltransferase which efficiently conjugates very long-chain and long-chain fatty acids to taurine. Shows no conjugation activity in the presence of glycine. This is Acyl-coenzyme A amino acid N-acyltransferase 2 from Rattus norvegicus (Rat).